Consider the following 272-residue polypeptide: Phosphate import ATP-binding protein PstB (272 aa).

Residues 18-257 (VSMQNVTISY…FNDTQSIFNS (240 aa)) form the ABC transporter domain. Residue 50-57 (GPSGCGKS) coordinates ATP.

The protein belongs to the ABC transporter superfamily. Phosphate importer (TC 3.A.1.7) family. In terms of assembly, the complex is composed of two ATP-binding proteins (PstB), two transmembrane proteins (PstC and PstA) and a solute-binding protein (PstS).

Its subcellular location is the cell inner membrane. The catalysed reaction is phosphate(out) + ATP + H2O = ADP + 2 phosphate(in) + H(+). Its function is as follows. Part of the ABC transporter complex PstSACB involved in phosphate import. Responsible for energy coupling to the transport system. The protein is Phosphate import ATP-binding protein PstB of Synechococcus sp. (strain CC9902).